A 63-amino-acid polypeptide reads, in one-letter code: Conotoxin Cal6.28 (63 aa).

The first 22 residues, 1-22, serve as a signal peptide directing secretion; that stretch reads MKLTCVLIVAVLILTACQVIAA. Disulfide bonds link C34–C45, C37–C51, and C44–C58.

This sequence belongs to the conotoxin O1 superfamily. As to expression, expressed by the venom duct.

Its subcellular location is the secreted. Probable neurotoxin. The protein is Conotoxin Cal6.28 of Californiconus californicus (California cone).